The sequence spans 162 residues: Inorganic pyrophosphatase (162 aa).

E8 is a Mg(2+) binding site. K16, R30, and Y42 together coordinate substrate. Mg(2+) contacts are provided by D52, D57, D84, and D89. D89 functions as the Proton acceptor in the catalytic mechanism. Y126 lines the substrate pocket.

This sequence belongs to the PPase family. In terms of assembly, homohexamer. It depends on Mg(2+) as a cofactor.

It localises to the cytoplasm. It catalyses the reaction diphosphate + H2O = 2 phosphate + H(+). Catalyzes the hydrolysis of inorganic pyrophosphate (PPi) forming two phosphate ions. This Mycobacterium bovis (strain ATCC BAA-935 / AF2122/97) protein is Inorganic pyrophosphatase.